Here is a 303-residue protein sequence, read N- to C-terminus: uncharacterized protein (303 aa).

NADP(+)-binding positions include 7-12 (GAGGVG) and Asn-101. Residue Lys-184 is the Proton donor of the active site. Glu-267 serves as a coordination point for NADP(+).

This sequence belongs to the ketopantoate reductase family.

This is an uncharacterized protein from Bacillus subtilis (strain 168).